The following is a 347-amino-acid chain: Protein RecA (347 aa).

Residue 66-73 (GPESSGKT) participates in ATP binding. Residues 328-347 (MPKPNAPKATDEALDETGTD) form a disordered region.

Belongs to the RecA family.

The protein localises to the cytoplasm. In terms of biological role, can catalyze the hydrolysis of ATP in the presence of single-stranded DNA, the ATP-dependent uptake of single-stranded DNA by duplex DNA, and the ATP-dependent hybridization of homologous single-stranded DNAs. It interacts with LexA causing its activation and leading to its autocatalytic cleavage. In Hydrogenovibrio crunogenus (strain DSM 25203 / XCL-2) (Thiomicrospira crunogena), this protein is Protein RecA.